The chain runs to 208 residues: Thiamine-phosphate synthase (208 aa).

Residues 38-42 (QYRSK) and N70 each bind 4-amino-2-methyl-5-(diphosphooxymethyl)pyrimidine. Mg(2+) is bound by residues D71 and D90. Residue T109 coordinates 4-amino-2-methyl-5-(diphosphooxymethyl)pyrimidine. 136-138 (SAT) is a binding site for 2-[(2R,5Z)-2-carboxy-4-methylthiazol-5(2H)-ylidene]ethyl phosphate. 4-amino-2-methyl-5-(diphosphooxymethyl)pyrimidine is bound at residue K139. Residues G166 and 186-187 (VS) contribute to the 2-[(2R,5Z)-2-carboxy-4-methylthiazol-5(2H)-ylidene]ethyl phosphate site.

This sequence belongs to the thiamine-phosphate synthase family. Requires Mg(2+) as cofactor.

The enzyme catalyses 2-[(2R,5Z)-2-carboxy-4-methylthiazol-5(2H)-ylidene]ethyl phosphate + 4-amino-2-methyl-5-(diphosphooxymethyl)pyrimidine + 2 H(+) = thiamine phosphate + CO2 + diphosphate. The catalysed reaction is 2-(2-carboxy-4-methylthiazol-5-yl)ethyl phosphate + 4-amino-2-methyl-5-(diphosphooxymethyl)pyrimidine + 2 H(+) = thiamine phosphate + CO2 + diphosphate. It carries out the reaction 4-methyl-5-(2-phosphooxyethyl)-thiazole + 4-amino-2-methyl-5-(diphosphooxymethyl)pyrimidine + H(+) = thiamine phosphate + diphosphate. It participates in cofactor biosynthesis; thiamine diphosphate biosynthesis; thiamine phosphate from 4-amino-2-methyl-5-diphosphomethylpyrimidine and 4-methyl-5-(2-phosphoethyl)-thiazole: step 1/1. Its function is as follows. Condenses 4-methyl-5-(beta-hydroxyethyl)thiazole monophosphate (THZ-P) and 2-methyl-4-amino-5-hydroxymethyl pyrimidine pyrophosphate (HMP-PP) to form thiamine monophosphate (TMP). In Aromatoleum aromaticum (strain DSM 19018 / LMG 30748 / EbN1) (Azoarcus sp. (strain EbN1)), this protein is Thiamine-phosphate synthase.